A 264-amino-acid polypeptide reads, in one-letter code: Thymidylate synthase (264 aa).

Arginine 21 is a binding site for dUMP. Histidine 51 provides a ligand contact to (6R)-5,10-methylene-5,6,7,8-tetrahydrofolate. DUMP is bound at residue 126 to 127; the sequence is RR. Residue cysteine 146 is the Nucleophile of the active site. Residues 166 to 169, asparagine 177, and 207 to 209 each bind dUMP; these read RSCD and HLY. Aspartate 169 contributes to the (6R)-5,10-methylene-5,6,7,8-tetrahydrofolate binding site. Position 263 (alanine 263) interacts with (6R)-5,10-methylene-5,6,7,8-tetrahydrofolate.

This sequence belongs to the thymidylate synthase family. Bacterial-type ThyA subfamily. As to quaternary structure, homodimer.

Its subcellular location is the cytoplasm. The catalysed reaction is dUMP + (6R)-5,10-methylene-5,6,7,8-tetrahydrofolate = 7,8-dihydrofolate + dTMP. It functions in the pathway pyrimidine metabolism; dTTP biosynthesis. Catalyzes the reductive methylation of 2'-deoxyuridine-5'-monophosphate (dUMP) to 2'-deoxythymidine-5'-monophosphate (dTMP) while utilizing 5,10-methylenetetrahydrofolate (mTHF) as the methyl donor and reductant in the reaction, yielding dihydrofolate (DHF) as a by-product. This enzymatic reaction provides an intracellular de novo source of dTMP, an essential precursor for DNA biosynthesis. This chain is Thymidylate synthase, found in Shewanella denitrificans (strain OS217 / ATCC BAA-1090 / DSM 15013).